A 177-amino-acid chain; its full sequence is Dual-action ribosomal maturation protein DarP (177 aa).

The protein belongs to the DarP family.

The protein localises to the cytoplasm. Member of a network of 50S ribosomal subunit biogenesis factors which assembles along the 30S-50S interface, preventing incorrect 23S rRNA structures from forming. Promotes peptidyl transferase center (PTC) maturation. In Histophilus somni (strain 129Pt) (Haemophilus somnus), this protein is Dual-action ribosomal maturation protein DarP.